The chain runs to 441 residues: Arginine biosynthesis bifunctional protein ArgJ, mitochondrial (441 aa).

Residues threonine 177, lysine 203, threonine 214, glutamate 303, asparagine 436, and serine 441 each coordinate substrate. Threonine 214 (nucleophile) is an active-site residue.

It belongs to the ArgJ family. Heterodimer of an alpha and a beta chain. Post-translationally, the alpha and beta chains are autoproteolytically processed from a single precursor protein within the mitochondrion.

Its subcellular location is the mitochondrion matrix. It catalyses the reaction N(2)-acetyl-L-ornithine + L-glutamate = N-acetyl-L-glutamate + L-ornithine. It carries out the reaction L-glutamate + acetyl-CoA = N-acetyl-L-glutamate + CoA + H(+). Its pathway is amino-acid biosynthesis; L-arginine biosynthesis; L-ornithine and N-acetyl-L-glutamate from L-glutamate and N(2)-acetyl-L-ornithine (cyclic): step 1/1. The protein operates within amino-acid biosynthesis; L-arginine biosynthesis; N(2)-acetyl-L-ornithine from L-glutamate: step 1/4. In terms of biological role, catalyzes two activities which are involved in the cyclic version of arginine biosynthesis: the synthesis of acetylglutamate from glutamate and acetyl-CoA, and of ornithine by transacetylation between acetylornithine and glutamate. The protein is Arginine biosynthesis bifunctional protein ArgJ, mitochondrial of Debaryomyces hansenii (strain ATCC 36239 / CBS 767 / BCRC 21394 / JCM 1990 / NBRC 0083 / IGC 2968) (Yeast).